The following is a 1150-amino-acid chain: MSLRFIYGRAGSGKSQYCLNSIKNRIEEDIDRPLILLVPEQFSFQAEKNLIEVLDEKTGFKTQVLSFKRMAYRVFNEVGGITAKHMNESGKSMLLYNIIEDNKNNLKVFKKAAKRQGFITTISDIITEFKRYNITPEIILNNLENIEGDNLKYKMEDLALIFSQFETRLHKNYIDNEDDLTILVEKLNKSKQFDNAEIWIDEFSSFSPQEYSVLEKLLLKSYRINITLCTDYLNQGRFVDTTDVFSPIKNTENKLLQIIEDNNIKLDKPIALKCDPCARFKNSAELQHLEKNMFSFPYKEYKNETKDICMLKTLNQFTEIENTAKDIIKLCIDKGCRFKDIAVITGDLEGYENIISSVFLQYNIPFFIDKKREINNNPIIVLILSALEVLSKNWTYESVFRYLKTGLLDINNEEMDILENYVLANGIKGYQWTNDKPWEHKSFSNYELEDQALKELLAKINDIRYKAMEPIVTLNKNFKSIDKAKEFCEVLYEFLCNINLPDKIQNMIEDFKVEGEIEKASEYNQIWNIVMEVLDQIVEVIGEEKISLKEFFKILQTGFSEYEIGLIPPTLDQVMVGSITRLRSHNINTLYIVGVNDGIFPSPLKEEGILSDDDREFLGDKGLEIAKDTKSIAFEEQFLVYSTLTTPSKYLRLSYPIADGEGKTLRPSIIISRIKKIFANICEENDIVKLNGEEEELKNISSAKPTFNYLISNLRKDVEGVKIDNIWGDTYKWYLENEFWIEKLNRLIKGFDYTNQSKYIETKKIRNLYGKPLKISVSRVEKFSQCPFAYFVQYGLKAKDRKIFNLSYPDLGIFMHSILEKFSHELEKKGLEWGTMDLNWAEEEIDKLINEELDNKSLDILNSSKRYEYVTKSVKKILKRSIWLIGEHIKRGNFKPSYYELSFDIDGDYPPIAMELHSGEVINLIGRVDRVDLLQKDGATYLKIIDYKSGIKEFKLSDVYYGLQLQLLIYLDAILTELAERSGINGEPGALLYLKLDDPIVKNTVDMSDEEIEKSIIKNLKMKGLILNDPNVIRDMDNIISGISDIIPVMVKKDGGVSEGRSSVATKEEFETLRKYVRYTIIEICEEMLEGNIEIKPYKKKDGSSCDYCIYSSVCKFDTNIRGNKYNILIDKKDEEVWDAIKKKLEYKNI.

8 to 15 (GRAGSGKS) contributes to the ATP binding site. 4 residues coordinate [4Fe-4S] cluster: Cys-786, Cys-1106, Cys-1109, and Cys-1115.

Belongs to the helicase family. AddB/RexB type 1 subfamily. As to quaternary structure, heterodimer of AddA and AddB. Mg(2+) serves as cofactor. Requires [4Fe-4S] cluster as cofactor.

In terms of biological role, the heterodimer acts as both an ATP-dependent DNA helicase and an ATP-dependent, dual-direction single-stranded exonuclease. Recognizes the chi site generating a DNA molecule suitable for the initiation of homologous recombination. The AddB subunit has 5' -&gt; 3' nuclease activity but not helicase activity. In Clostridium botulinum (strain Okra / Type B1), this protein is ATP-dependent helicase/deoxyribonuclease subunit B.